Here is a 382-residue protein sequence, read N- to C-terminus: UBP1-associated proteins 1B (382 aa).

The disordered stretch occupies residues 1 to 99 (MAKEGEERKK…SDESEEIVDS (99 aa)). Basic residues predominate over residues 10–22 (KEKKEKKERKERK). Positions 23–34 (RREAEELAVREK) are enriched in basic and acidic residues. One can recognise an RRM domain in the interval 163–248 (RNIFVRGLGW…RPFNSGKPRE (86 aa)).

It is found in the nucleus. In terms of biological role, acts as a component of a complex regulating the turnover of mRNAs in the nucleus. Binds with high affinity to RNA molecules that contain U-rich sequences in 3'-UTRs. May function in complex with UBP1 and contribute to the stabilization of mRNAs in the nucleus. This Arabidopsis thaliana (Mouse-ear cress) protein is UBP1-associated proteins 1B (UBA1B).